A 466-amino-acid polypeptide reads, in one-letter code: Glutamate decarboxylase alpha (466 aa).

Substrate-binding residues include Thr-62 and Asn-83. Pyridoxal 5'-phosphate-binding positions include 126-127, Thr-212, and His-275; that span reads SS. Lys-276 bears the N6-(pyridoxal phosphate)lysine mark.

The protein belongs to the group II decarboxylase family. As to quaternary structure, homohexamer. It depends on pyridoxal 5'-phosphate as a cofactor.

It carries out the reaction L-glutamate + H(+) = 4-aminobutanoate + CO2. Converts glutamate to gamma-aminobutyrate (GABA), consuming one intracellular proton in the reaction. The gad system helps to maintain a near-neutral intracellular pH when cells are exposed to extremely acidic conditions. The ability to survive transit through the acidic conditions of the stomach is essential for successful colonization of the mammalian host by commensal and pathogenic bacteria. In Shigella flexneri, this protein is Glutamate decarboxylase alpha (gadA).